The following is a 213-amino-acid chain: Thiopurine S-methyltransferase (213 aa).

S-adenosyl-L-methionine-binding residues include tryptophan 10, methionine 45, glutamate 66, and arginine 120.

The protein belongs to the class I-like SAM-binding methyltransferase superfamily. TPMT family.

Its subcellular location is the cytoplasm. The catalysed reaction is S-adenosyl-L-methionine + a thiopurine = S-adenosyl-L-homocysteine + a thiopurine S-methylether.. The protein is Thiopurine S-methyltransferase of Photobacterium profundum (strain SS9).